The sequence spans 396 residues: Tyrosine--tRNA ligase (396 aa).

Y36 provides a ligand contact to L-tyrosine. The short motif at 41 to 50 (PTANSLHIGN) is the 'HIGH' region element. L-tyrosine is bound by residues Y165 and Q169. Residues 225-229 (KMGKT) carry the 'KMSKS' region motif. K228 provides a ligand contact to ATP. The S4 RNA-binding domain maps to 331–394 (TNLIDYLVET…KKSFLTIKTV (64 aa)).

It belongs to the class-I aminoacyl-tRNA synthetase family. TyrS type 1 subfamily. As to quaternary structure, homodimer.

The protein resides in the cytoplasm. It catalyses the reaction tRNA(Tyr) + L-tyrosine + ATP = L-tyrosyl-tRNA(Tyr) + AMP + diphosphate + H(+). Functionally, catalyzes the attachment of tyrosine to tRNA(Tyr) in a two-step reaction: tyrosine is first activated by ATP to form Tyr-AMP and then transferred to the acceptor end of tRNA(Tyr). The polypeptide is Tyrosine--tRNA ligase (Mycoplasma genitalium (strain ATCC 33530 / DSM 19775 / NCTC 10195 / G37) (Mycoplasmoides genitalium)).